Here is a 242-residue protein sequence, read N- to C-terminus: Orotidine 5'-phosphate decarboxylase (242 aa).

Substrate is bound by residues Asp22, Lys44, 71 to 80 (DLKYHDIPNT), Thr130, Arg190, Gln199, Gly219, and Arg220. Lys73 serves as the catalytic Proton donor.

Belongs to the OMP decarboxylase family. Type 1 subfamily. Homodimer.

It carries out the reaction orotidine 5'-phosphate + H(+) = UMP + CO2. Its pathway is pyrimidine metabolism; UMP biosynthesis via de novo pathway; UMP from orotate: step 2/2. In terms of biological role, catalyzes the decarboxylation of orotidine 5'-monophosphate (OMP) to uridine 5'-monophosphate (UMP). In Laribacter hongkongensis (strain HLHK9), this protein is Orotidine 5'-phosphate decarboxylase.